The primary structure comprises 245 residues: Endo-chitosanase (245 aa).

An N-terminal signal peptide occupies residues 1–17 (MHFAGIVAIALATGATA).

Belongs to the glycosyl hydrolase 75 family.

It localises to the secreted. The catalysed reaction is Endohydrolysis of beta-(1-&gt;4)-linkages between D-glucosamine residues in a partly acetylated chitosan.. In terms of biological role, chitosanase catalyzing the endo-type cleavage of chitosan, the deacylated form of chitin. Chitosanase may be crucial in the degradation of the deacetylated portion of chitin in the fungal cell wall. Chitoolisaccharides produced by the hydrolysis of partially N-acetylated chitosan are known to have many biological activities, including antibacterial activity, immune-enhancing effects, and elicitor activity. This is Endo-chitosanase (csn) from Aspergillus oryzae (strain ATCC 42149 / RIB 40) (Yellow koji mold).